A 182-amino-acid chain; its full sequence is Small ribosomal subunit protein uS4c (182 aa).

Positions 82–143 (MRLDNILFRL…KERSKVLIQN (62 aa)) constitute an S4 RNA-binding domain.

Belongs to the universal ribosomal protein uS4 family. Part of the 30S ribosomal subunit. Contacts protein S5. The interaction surface between S4 and S5 is involved in control of translational fidelity.

The protein resides in the plastid. Its subcellular location is the chloroplast. Functionally, one of the primary rRNA binding proteins, it binds directly to 16S rRNA where it nucleates assembly of the body of the 30S subunit. In terms of biological role, with S5 and S12 plays an important role in translational accuracy. The protein is Small ribosomal subunit protein uS4c (rps4) of Tigridia sp. (strain Lejeune 1997).